The following is a 410-amino-acid chain: Aspartate aminotransferase (410 aa).

Positions 47, 135, and 185 each coordinate L-aspartate. Position 249 is an N6-(pyridoxal phosphate)lysine (lysine 249). Arginine 385 contributes to the L-aspartate binding site.

The protein belongs to the class-I pyridoxal-phosphate-dependent aminotransferase family. Homodimer. Pyridoxal 5'-phosphate is required as a cofactor.

It localises to the cytoplasm. It carries out the reaction L-aspartate + 2-oxoglutarate = oxaloacetate + L-glutamate. The catalysed reaction is L-2-aminoadipate + 2-oxoglutarate = 2-oxoadipate + L-glutamate. Catalyzes the reversible conversion of aspartate and 2-oxoglutarate to glutamate and oxaloacetate. Genetic evidence shows that this protein is involved in L-lysine catabolism. It may have 2-aminoadipate:2-oxoglutarate aminotransferase activity. The polypeptide is Aspartate aminotransferase (aatB) (Rhizobium meliloti (strain 1021) (Ensifer meliloti)).